The following is a 1004-amino-acid chain: Cadmium/zinc-transporting ATPase HMA3 (1004 aa).

The HMA domain maps to 42–108; that stretch reads KKTYLDVLGV…ALNKAGLEAS (67 aa). 8 consecutive transmembrane segments (helical) span residues 120–140, 144–164, 171–191, 193–213, 340–360, 371–391, 683–703, and 707–727; these read RWPS…FFEW, PLQC…VRRG, LSLD…CLGD, TEAG…TLAC, CAKY…LIPA, WKLA…LSTP, IAVN…LAAA, and VLWA…LNSM. Residues 931–952 form a disordered region; the sequence is TGCGASKRSPPAEGSCSGGEGG.

It belongs to the cation transport ATPase (P-type) (TC 3.A.3) family. Type IB subfamily. Specifically expressed in roots.

Its subcellular location is the vacuole membrane. The enzyme catalyses Zn(2+)(in) + ATP + H2O = Zn(2+)(out) + ADP + phosphate + H(+). The catalysed reaction is Cd(2+)(in) + ATP + H2O = Cd(2+)(out) + ADP + phosphate + H(+). Its function is as follows. Root-specific cadmium (Cd) transporter that mediates Cd efflux in root vacuoles. Involved in Cd detoxification by sequestrating Cd into root vacuoles and limiting translocation of Cd from the roots to the shoots, and accumulation in grains. The protein is Cadmium/zinc-transporting ATPase HMA3 of Oryza sativa subsp. japonica (Rice).